An 89-amino-acid chain; its full sequence is uncharacterized protein (89 aa).

A signal peptide spans 1 to 27 (MKKAAAVLLSLGLVFGFSYGAGHVAEA).

This is an uncharacterized protein from Bacillus subtilis (strain 168).